We begin with the raw amino-acid sequence, 116 residues long: Selenoprotein H (116 aa).

At Lys-20 the chain carries N6-acetyllysine. A cross-link (cysteinyl-selenocysteine (Cys-Sec); redox-active) is located at residues Cys-35–Sec-38. A non-standard amino acid (selenocysteine) is located at residue Sec-38.

The protein belongs to the SelWTH family.

In terms of biological role, may be involved in a redox-related process. The sequence is that of Selenoprotein H from Mus musculus (Mouse).